The primary structure comprises 104 residues: Thioredoxin-2 (104 aa).

Residues 2 to 104 (VTQLKSASEY…AIKQAIASNV (103 aa)) enclose the Thioredoxin domain. Active-site nucleophile residues include cysteine 31 and cysteine 34. Cysteine 31 and cysteine 34 are joined by a disulfide. Serine 62 is subject to Phosphoserine. Glycyl lysine isopeptide (Lys-Gly) (interchain with G-Cter in ubiquitin) cross-links involve residues lysine 67 and lysine 97.

This sequence belongs to the thioredoxin family. Monomer. Part of the heterodimeric LMA1 complex together with the proteinase inhibitor PBI2. LMA1 binds to the ATPase SEC18. In terms of processing, reversible disulfide bond formation between Cys-31 and Cys-34, reverted by thioredoxin reductase TRR1 using NADPH as hydrogen donor.

It localises to the cytoplasm. It is found in the golgi apparatus membrane. The protein localises to the nucleus. Functionally, participates as a hydrogen donor in redox reactions through the reversible oxidation of its active center dithiol to a disulfide, accompanied by the transfer of 2 electrons and 2 protons. It is involved in many cellular processes, including deoxyribonucleotide synthesis, repair of oxidatively damaged proteins, protein folding, sulfur metabolism, and redox homeostasis. Thioredoxin-dependent enzymes include phosphoadenosine-phosphosulfate reductase MET16, alkyl-hydroperoxide reductase DOT5, thioredoxin peroxidases TSA1 and TSA2, alkyl hydroperoxide reductase AHP1, and peroxiredoxin HYR1. Thioredoxin is also involved in protection against reducing stress. As part of the LMA1 complex, it is involved in the facilitation of vesicle fusion such as homotypic vacuole and ER-derived COPII vesicle fusion with the Golgi. This activity does not require the redox mechanism. Through its capacity to inactivate the stress response transcription factor YAP1 and its regulator the hydroperoxide stress sensor HYR1, it is involved in feedback regulation of stress response gene expression upon oxidative stress. In Saccharomyces cerevisiae (strain ATCC 204508 / S288c) (Baker's yeast), this protein is Thioredoxin-2 (TRX2).